A 311-amino-acid chain; its full sequence is Aspartate carbamoyltransferase catalytic subunit (311 aa).

Residues R58 and T59 each contribute to the carbamoyl phosphate site. Residue K86 coordinates L-aspartate. R108, H136, and Q139 together coordinate carbamoyl phosphate. L-aspartate-binding residues include R169 and R224. Residues G265 and P266 each contribute to the carbamoyl phosphate site.

Belongs to the aspartate/ornithine carbamoyltransferase superfamily. ATCase family. In terms of assembly, heterododecamer (2C3:3R2) of six catalytic PyrB chains organized as two trimers (C3), and six regulatory PyrI chains organized as three dimers (R2).

It catalyses the reaction carbamoyl phosphate + L-aspartate = N-carbamoyl-L-aspartate + phosphate + H(+). The protein operates within pyrimidine metabolism; UMP biosynthesis via de novo pathway; (S)-dihydroorotate from bicarbonate: step 2/3. Its function is as follows. Catalyzes the condensation of carbamoyl phosphate and aspartate to form carbamoyl aspartate and inorganic phosphate, the committed step in the de novo pyrimidine nucleotide biosynthesis pathway. The polypeptide is Aspartate carbamoyltransferase catalytic subunit (Geotalea daltonii (strain DSM 22248 / JCM 15807 / FRC-32) (Geobacter daltonii)).